Consider the following 66-residue polypeptide: MKCIALFLVLSMVVLMAEPGEAFIHHIIGGLFHVGKSIHDLIRGKNRDMAEQQELERAFDRERAFA.

Positions 1-22 are cleaved as a signal peptide; the sequence is MKCIALFLVLSMVVLMAEPGEA. Arg-43 carries the arginine amide; partial modification. The propeptide occupies 44 to 66; it reads GKNRDMAEQQELERAFDRERAFA.

The protein belongs to the pleurocidin family. This peptide exists in N-terminally amidated and non-amidated forms. The amidated form is more active and has a greater alpha-helix content than the non-amidated form. As to expression, expressed in gill, skin, intestine, spleen, anterior kidney, and blood cells.

The protein resides in the secreted. Functionally, the amidated peptide is bactericidal on human pathogens like S.aureus or E.coli, as well as on the fish pathogen A.salmonicida. May also be active against a variety of fungi. It can kill bacteria in less than 30 minutes (S.aureus) and 120 minutes (V.vulnificus). It induces hemolysis of erythrocytes from human and fishes (sea bass and lesser-spotted dogfish). In terms of biological role, the non-amidated peptide only inhibits growth of human pathogens like S.aureus or E.coli, and the fish pathogen A.salmonicida. Induces hemolysis of erythrocytes from human and fishes (sea bass and lesser-spotted dogfish). The protein is Pteroicidin-alpha of Pterois volitans (Red lionfish).